Reading from the N-terminus, the 295-residue chain is Pyridoxal 5'-phosphate synthase subunit PdxS (295 aa).

Residue Asp25 coordinates D-ribose 5-phosphate. Lys82 (schiff-base intermediate with D-ribose 5-phosphate) is an active-site residue. Gly154 contributes to the D-ribose 5-phosphate binding site. Arg166 serves as a coordination point for D-glyceraldehyde 3-phosphate. D-ribose 5-phosphate-binding positions include Gly215 and 236–237 (GS).

This sequence belongs to the PdxS/SNZ family. In terms of assembly, in the presence of PdxT, forms a dodecamer of heterodimers.

It carries out the reaction aldehydo-D-ribose 5-phosphate + D-glyceraldehyde 3-phosphate + L-glutamine = pyridoxal 5'-phosphate + L-glutamate + phosphate + 3 H2O + H(+). Its pathway is cofactor biosynthesis; pyridoxal 5'-phosphate biosynthesis. Its function is as follows. Catalyzes the formation of pyridoxal 5'-phosphate from ribose 5-phosphate (RBP), glyceraldehyde 3-phosphate (G3P) and ammonia. The ammonia is provided by the PdxT subunit. Can also use ribulose 5-phosphate and dihydroxyacetone phosphate as substrates, resulting from enzyme-catalyzed isomerization of RBP and G3P, respectively. The protein is Pyridoxal 5'-phosphate synthase subunit PdxS of Dictyoglomus turgidum (strain DSM 6724 / Z-1310).